Consider the following 186-residue polypeptide: Translation initiation factor IF-3 (186 aa).

Belongs to the IF-3 family. Monomer.

It localises to the cytoplasm. Its function is as follows. IF-3 binds to the 30S ribosomal subunit and shifts the equilibrium between 70S ribosomes and their 50S and 30S subunits in favor of the free subunits, thus enhancing the availability of 30S subunits on which protein synthesis initiation begins. This is Translation initiation factor IF-3 from Borrelia garinii subsp. bavariensis (strain ATCC BAA-2496 / DSM 23469 / PBi) (Borreliella bavariensis).